We begin with the raw amino-acid sequence, 128 residues long: Ribonuclease P protein component (128 aa).

It belongs to the RnpA family. In terms of assembly, consists of a catalytic RNA component (M1 or rnpB) and a protein subunit.

The enzyme catalyses Endonucleolytic cleavage of RNA, removing 5'-extranucleotides from tRNA precursor.. Functionally, RNaseP catalyzes the removal of the 5'-leader sequence from pre-tRNA to produce the mature 5'-terminus. It can also cleave other RNA substrates such as 4.5S RNA. The protein component plays an auxiliary but essential role in vivo by binding to the 5'-leader sequence and broadening the substrate specificity of the ribozyme. In Rhizobium meliloti (strain 1021) (Ensifer meliloti), this protein is Ribonuclease P protein component.